We begin with the raw amino-acid sequence, 104 residues long: Large ribosomal subunit protein uL24 (104 aa).

This sequence belongs to the universal ribosomal protein uL24 family. In terms of assembly, part of the 50S ribosomal subunit.

One of two assembly initiator proteins, it binds directly to the 5'-end of the 23S rRNA, where it nucleates assembly of the 50S subunit. Its function is as follows. One of the proteins that surrounds the polypeptide exit tunnel on the outside of the subunit. The chain is Large ribosomal subunit protein uL24 from Sodalis glossinidius (strain morsitans).